We begin with the raw amino-acid sequence, 339 residues long: Heat-inducible transcription repressor HrcA (339 aa).

The protein belongs to the HrcA family.

Its function is as follows. Negative regulator of class I heat shock genes (grpE-dnaK-dnaJ and groELS operons). Prevents heat-shock induction of these operons. The polypeptide is Heat-inducible transcription repressor HrcA (Paraburkholderia phymatum (strain DSM 17167 / CIP 108236 / LMG 21445 / STM815) (Burkholderia phymatum)).